The following is a 177-amino-acid chain: Large ribosomal subunit protein uL6 (177 aa).

The protein belongs to the universal ribosomal protein uL6 family. As to quaternary structure, part of the 50S ribosomal subunit.

In terms of biological role, this protein binds to the 23S rRNA, and is important in its secondary structure. It is located near the subunit interface in the base of the L7/L12 stalk, and near the tRNA binding site of the peptidyltransferase center. In Shewanella baltica (strain OS223), this protein is Large ribosomal subunit protein uL6.